Consider the following 125-residue polypeptide: Sulfiredoxin, chloroplastic/mitochondrial (125 aa).

The N-terminal 22 residues, 1 to 22 (MANLMMRLPISLRSFSVSASSS), are a transit peptide targeting the chloroplast and mitochondrion.

This sequence belongs to the sulfiredoxin family. As to expression, low expression in photosynthetic tissues such as leaves and sepals.

It is found in the plastid. Its subcellular location is the chloroplast. The protein localises to the mitochondrion. The enzyme catalyses S-hydroxy-S-oxy-L-cysteinyl-[peroxiredoxin] + [protein]-dithiol + ATP = S-hydroxy-L-cysteinyl-[peroxiredoxin] + [protein]-disulfide + ADP + phosphate. In terms of biological role, contributes to oxidative stress resistance by reducing cysteine-sulfinic acid formed under exposure to oxidants in a peroxiredoxin. May catalyze the reduction in a multi-step process by acting both as a specific phosphotransferase and a thioltransferase. Required to switch on the antioxidant pathway to regenerate the oxidative damage. In mitochondrion, catalyzes the retroreduction of the inactive sulfinic form of atypical Prx IIF using thioredoxin as reducing agent. The chain is Sulfiredoxin, chloroplastic/mitochondrial (SRX) from Arabidopsis thaliana (Mouse-ear cress).